We begin with the raw amino-acid sequence, 256 residues long: MYSTRFRRGLSYVPRRYNPRNYGFKRTFVVKRGDAKRRQTQVKKLTEDVKMSSQRIHENQYGPEFVMAHNTAISTFINYPQLCKTQPNRSRSYIKLKSLHFKGTLKIERVGSEVNMAGLNPKIEGVFTVVLVVDRKPHLNPTGNLLQFDELFGARIHSLGNLAVTPALKERFYILHVLKRVISVEKDSMMLDLEGSTCLSSRRYNCWSTFKDLDPSSCNGVYDNISKNAILVYYCWMSDAMSKASTFVSFDLDYFG.

The Bipartite nuclear localization signal signature appears at 21 to 42; sequence NYGFKRTFVVKRGDAKRRQTQV. The Nuclear localization signal motif lies at 81-96; that stretch reads QLCKTQPNRSRSYIKL. The segment at 150-187 is interaction with Arabidopsis thaliana NSI protein; sequence ELFGARIHSLGNLAVTPALKERFYILHVLKRVISVEKD.

This sequence belongs to the begomovirus nuclear shuttle protein family. As to quaternary structure, binds to single-stranded and double-stranded viral DNA. Interacts with the host nuclear shuttle interacting (NSI) protein. This interaction may allow NSP to recruit NSI monomers to the viral genome and thus regulate nuclear export of viral genome by NSP.

The protein resides in the host nucleus. It localises to the host cytoplasm. Its subcellular location is the host cell membrane. Binds to the genomic viral ssDNA, shuttles it into and out of the cell nucleus. Begomoviruses use 2 proteins to transport their DNA from cell to cell. The nuclear shuttle protein (NSP) shuttles it between nucleus and cytoplasm and the movement protein (MP) probably transports the DNA-NSP complex to the cell periphery and facilitates movement across the cell wall. The chain is Nuclear shuttle protein from Pepper huasteco yellow vein virus (PHYVV).